The following is a 715-amino-acid chain: Elongation factor G (715 aa).

Residues 12–309 form the tr-type G domain; the sequence is RRVRNIGIMA…GVIDYLPSPL (298 aa). Residues 21–28, 108–112, and 162–165 each bind GTP; these read AHIDAGKT, DTPGH, and NKMD.

This sequence belongs to the TRAFAC class translation factor GTPase superfamily. Classic translation factor GTPase family. EF-G/EF-2 subfamily.

The protein localises to the cytoplasm. Its function is as follows. Catalyzes the GTP-dependent ribosomal translocation step during translation elongation. During this step, the ribosome changes from the pre-translocational (PRE) to the post-translocational (POST) state as the newly formed A-site-bound peptidyl-tRNA and P-site-bound deacylated tRNA move to the P and E sites, respectively. Catalyzes the coordinated movement of the two tRNA molecules, the mRNA and conformational changes in the ribosome. This is Elongation factor G from Rubrobacter xylanophilus (strain DSM 9941 / JCM 11954 / NBRC 16129 / PRD-1).